We begin with the raw amino-acid sequence, 133 residues long: Probable mitochondrial pyruvate carrier 2 (133 aa).

3 helical membrane passes run 40–57, 73–91, and 100–116; these read VFFW…AGLA, ALFA…ITPI, and FFVM…IAHY.

This sequence belongs to the mitochondrial pyruvate carrier (MPC) (TC 2.A.105) family.

It localises to the mitochondrion inner membrane. In terms of biological role, may mediate the uptake of pyruvate into mitochondria. The protein is Probable mitochondrial pyruvate carrier 2 of Caenorhabditis elegans.